The following is a 49-amino-acid chain: Large ribosomal subunit protein bL33 (49 aa).

The protein belongs to the bacterial ribosomal protein bL33 family.

The polypeptide is Large ribosomal subunit protein bL33 (Heliobacterium modesticaldum (strain ATCC 51547 / Ice1)).